The following is a 64-amino-acid chain: Large ribosomal subunit protein uL29 (64 aa).

The protein belongs to the universal ribosomal protein uL29 family.

The polypeptide is Large ribosomal subunit protein uL29 (Chloroherpeton thalassium (strain ATCC 35110 / GB-78)).